The sequence spans 416 residues: MTDMRRLGQRAKQASLLIAPLSTQIKNRFLSTLAKALVDDTQTLLAANQKDLANAKEHGISDIMMDRLRLTSERIKAMAQGVQQVADLADPIGQVIKGYTNLDGLKILQKRVPLGVIAMIFESRPNVSVDAFSLAFKTNNAIILRGGKDALHSNKALVKLIRQSLEKSGITPDAVQLVEDPSHAVAEELMQATDYVDVLIPRGGAKLIQTVKEKAKVPVIETGVGNVHIYVDAQADLDMATKIVINAKTKRPSVCNAAEGLVIHEAVAARFIPMLEKAINQVQPVEWRADDKALPLFEQAVPAKAEDFETEFLDYIMSVKVVSSLEEAIFWINQHTSHHSEAIITRDIKVAETFQDLVDAAAVYVNASTRFTDGFVFGLGAEIGISTQKMHARGPMGLEALTSTKFYINGDGHIRE.

Belongs to the gamma-glutamyl phosphate reductase family.

The protein localises to the cytoplasm. The catalysed reaction is L-glutamate 5-semialdehyde + phosphate + NADP(+) = L-glutamyl 5-phosphate + NADPH + H(+). It functions in the pathway amino-acid biosynthesis; L-proline biosynthesis; L-glutamate 5-semialdehyde from L-glutamate: step 2/2. Its function is as follows. Catalyzes the NADPH-dependent reduction of L-glutamate 5-phosphate into L-glutamate 5-semialdehyde and phosphate. The product spontaneously undergoes cyclization to form 1-pyrroline-5-carboxylate. The sequence is that of Gamma-glutamyl phosphate reductase from Streptococcus pyogenes serotype M49 (strain NZ131).